The primary structure comprises 391 residues: Protein-glutamate methylesterase/protein-glutamine glutaminase (391 aa).

A Response regulatory domain is found at 4 to 121 (KVLVVDDSSF…ARNNEDAIKL (118 aa)). Residue aspartate 55 is modified to 4-aspartylphosphate. Positions 197-391 (SGKHYQLVAI…IRLKTEVGCG (195 aa)) constitute a CheB-type methylesterase domain. Active-site residues include serine 209, histidine 236, and aspartate 333.

This sequence belongs to the CheB family. Post-translationally, phosphorylated by CheA. Phosphorylation of the N-terminal regulatory domain activates the methylesterase activity.

The protein localises to the cytoplasm. It catalyses the reaction [protein]-L-glutamate 5-O-methyl ester + H2O = L-glutamyl-[protein] + methanol + H(+). It carries out the reaction L-glutaminyl-[protein] + H2O = L-glutamyl-[protein] + NH4(+). Its function is as follows. Involved in chemotaxis. Part of a chemotaxis signal transduction system that modulates chemotaxis in response to various stimuli. Catalyzes the demethylation of specific methylglutamate residues introduced into the chemoreceptors (methyl-accepting chemotaxis proteins or MCP) by CheR. Also mediates the irreversible deamidation of specific glutamine residues to glutamic acid. The sequence is that of Protein-glutamate methylesterase/protein-glutamine glutaminase from Pseudoalteromonas translucida (strain TAC 125).